Reading from the N-terminus, the 1311-residue chain is AF4/FMR2 family member 2 (1311 aa).

Disordered stretches follow at residues 94–187, 204–229, and 377–417; these read LVGI…LTQD, PQIGEVEESNPSAKEDSNPNSSGEDA, and TAGH…TKSV. A compositionally biased stretch (polar residues) spans 101-111; the sequence is SVPQNPNNKNE. Over residues 155-164 the composition is skewed to basic and acidic residues; it reads SKPEWSRDSH. Residues 165–187 are compositionally biased toward polar residues; sequence NPSTVLASQASGQPNKMQTLTQD. Composition is skewed to polar residues over residues 377 to 396 and 403 to 417; these read TAGHSEQSTFSIPGQESQHL and QKWNDPTTRASTKSV. Ser-430 bears the Phosphoserine mark. Disordered stretches follow at residues 457–530, 574–726, 818–867, and 881–943; these read KAKP…KWQL, TNAS…DQEE, SLHA…IPEK, and PPCI…DKNI. Residues 465-477 are compositionally biased toward pro residues; that stretch reads VNPPLATPQPPPA. The segment covering 478–491 has biased composition (low complexity); sequence VQASGGSGSSSESE. At Thr-517 the chain carries Phosphothreonine. Residues 582–597 are compositionally biased toward basic and acidic residues; sequence EPKERPLLSLIREKAR. Positions 615 to 625 are enriched in polar residues; that stretch reads STTSETVSQRT. Over residues 655–668 the composition is skewed to basic and acidic residues; the sequence is PKEKESVELHDPPR. Positions 669–679 are enriched in basic residues; sequence GRNKATAHKPA. Residues 857–867 show a composition bias toward basic and acidic residues; it reads PIEVAEKIPEK. 2 stretches are compositionally biased toward pro residues: residues 883-892 and 913-922; these read CISPAPPHKP and FPPPLSPLPE.

This sequence belongs to the AF4 family. In terms of tissue distribution, brain (most abundant in hippocampus and amygdala), placenta and lung.

It is found in the nucleus speckle. Its function is as follows. RNA-binding protein. Might be involved in alternative splicing regulation through an interaction with G-quartet RNA structure. The protein is AF4/FMR2 family member 2 of Homo sapiens (Human).